Consider the following 574-residue polypeptide: Thiol:disulfide interchange protein DsbD (574 aa).

The N-terminal stretch at 1–19 is a signal peptide; it reads MAHRILTLILLFCSAHASA. The cysteines at positions 122 and 128 are disulfide-linked. The interval 147-169 is disordered; that stretch reads VKANAATPSAATGEQTRVNSDSP. Residues 152-169 show a composition bias toward polar residues; it reads ATPSAATGEQTRVNSDSP. Helical transmembrane passes span 173 to 193, 218 to 238, 253 to 273, 306 to 326, 333 to 353, 367 to 387, and 399 to 419; these read LPFS…TPCV, LLAF…GLVV, WVLV…FGLF, IAGL…LLYI, WLGG…LILV, WMEQ…VFLL, and LWSV…LNAT. A disulfide bridge links cysteine 192 with cysteine 314. Positions 430–574 constitute a Thioredoxin domain; that stretch reads LLGAAMICAR…FATHLHNRLR (145 aa). Cysteine 489 and cysteine 492 are disulfide-bonded.

Belongs to the thioredoxin family. DsbD subfamily.

Its subcellular location is the cell inner membrane. It catalyses the reaction [protein]-dithiol + NAD(+) = [protein]-disulfide + NADH + H(+). The enzyme catalyses [protein]-dithiol + NADP(+) = [protein]-disulfide + NADPH + H(+). Its function is as follows. Required to facilitate the formation of correct disulfide bonds in some periplasmic proteins and for the assembly of the periplasmic c-type cytochromes. Acts by transferring electrons from cytoplasmic thioredoxin to the periplasm. This transfer involves a cascade of disulfide bond formation and reduction steps. This is Thiol:disulfide interchange protein DsbD from Cronobacter sakazakii (strain ATCC BAA-894) (Enterobacter sakazakii).